We begin with the raw amino-acid sequence, 430 residues long: Chaperone SurA (430 aa).

An N-terminal signal peptide occupies residues 1–25 (MQIIKTTIATFTAIAFTGAASFTSA). PpiC domains follow at residues 176–277 (SPDY…KLYE) and 286–385 (VNQT…KVEE).

Its subcellular location is the periplasm. The catalysed reaction is [protein]-peptidylproline (omega=180) = [protein]-peptidylproline (omega=0). Its function is as follows. Chaperone involved in the correct folding and assembly of outer membrane proteins. Recognizes specific patterns of aromatic residues and the orientation of their side chains, which are found more frequently in integral outer membrane proteins. May act in both early periplasmic and late outer membrane-associated steps of protein maturation. This is Chaperone SurA from Saccharophagus degradans (strain 2-40 / ATCC 43961 / DSM 17024).